We begin with the raw amino-acid sequence, 144 residues long: uncharacterized protein (144 aa).

4 helical membrane-spanning segments follow: residues 27-47 (VVCA…IPDI), 49-69 (LLPI…LLAL), 83-103 (IVLL…DATV), and 106-126 (ALDM…ILNV).

It localises to the membrane. This is an uncharacterized protein from Saccharomyces cerevisiae (strain ATCC 204508 / S288c) (Baker's yeast).